The following is a 357-amino-acid chain: Chorismate synthase (357 aa).

Arg48 and Arg54 together coordinate NADP(+). FMN is bound by residues 125-127 (RSS), 238-239 (NA), Gly278, 293-297 (KPTSS), and Arg319.

Belongs to the chorismate synthase family. As to quaternary structure, homotetramer. FMNH2 is required as a cofactor.

It catalyses the reaction 5-O-(1-carboxyvinyl)-3-phosphoshikimate = chorismate + phosphate. It functions in the pathway metabolic intermediate biosynthesis; chorismate biosynthesis; chorismate from D-erythrose 4-phosphate and phosphoenolpyruvate: step 7/7. Functionally, catalyzes the anti-1,4-elimination of the C-3 phosphate and the C-6 proR hydrogen from 5-enolpyruvylshikimate-3-phosphate (EPSP) to yield chorismate, which is the branch point compound that serves as the starting substrate for the three terminal pathways of aromatic amino acid biosynthesis. This reaction introduces a second double bond into the aromatic ring system. This chain is Chorismate synthase, found in Blochmanniella floridana.